We begin with the raw amino-acid sequence, 312 residues long: Malate dehydrogenase (312 aa).

Residues 7 to 13 (GAAGGIG) and aspartate 34 each bind NAD(+). Arginine 81 and arginine 87 together coordinate substrate. NAD(+) is bound by residues asparagine 94 and 117-119 (ITN). 2 residues coordinate substrate: asparagine 119 and arginine 153. The Proton acceptor role is filled by histidine 177. Methionine 227 provides a ligand contact to NAD(+).

The protein belongs to the LDH/MDH superfamily. MDH type 1 family. In terms of assembly, homodimer.

The enzyme catalyses (S)-malate + NAD(+) = oxaloacetate + NADH + H(+). Functionally, catalyzes the reversible oxidation of malate to oxaloacetate. The sequence is that of Malate dehydrogenase from Salmonella arizonae (strain ATCC BAA-731 / CDC346-86 / RSK2980).